The sequence spans 160 residues: Phosphatidylinositol N-acetylglucosaminyltransferase subunit gpi15 (160 aa).

Helical transmembrane passes span 22 to 42 (GTQMFALCFISFVIGATSLAI) and 48 to 68 (IIITLVELSFLLSLFHIISGV).

The protein belongs to the PIGH family.

Its subcellular location is the endoplasmic reticulum membrane. It carries out the reaction a 1,2-diacyl-sn-glycero-3-phospho-(1D-myo-inositol) + UDP-N-acetyl-alpha-D-glucosamine = a 6-(N-acetyl-alpha-D-glucosaminyl)-1-(1,2-diacyl-sn-glycero-3-phospho)-1D-myo-inositol + UDP + H(+). Its pathway is glycolipid biosynthesis; glycosylphosphatidylinositol-anchor biosynthesis. In terms of biological role, part of the complex catalyzing the transfer of N-acetylglucosamine from UDP-N-acetylglucosamine to phosphatidylinositol, the first step of GPI biosynthesis. This Schizosaccharomyces pombe (strain 972 / ATCC 24843) (Fission yeast) protein is Phosphatidylinositol N-acetylglucosaminyltransferase subunit gpi15 (gpi15).